Consider the following 463-residue polypeptide: 3-isopropylmalate dehydratase large subunit (463 aa).

Residues Cys347, Cys407, and Cys410 each coordinate [4Fe-4S] cluster.

It belongs to the aconitase/IPM isomerase family. LeuC type 1 subfamily. As to quaternary structure, heterodimer of LeuC and LeuD. It depends on [4Fe-4S] cluster as a cofactor.

The catalysed reaction is (2R,3S)-3-isopropylmalate = (2S)-2-isopropylmalate. The protein operates within amino-acid biosynthesis; L-leucine biosynthesis; L-leucine from 3-methyl-2-oxobutanoate: step 2/4. Its function is as follows. Catalyzes the isomerization between 2-isopropylmalate and 3-isopropylmalate, via the formation of 2-isopropylmaleate. The polypeptide is 3-isopropylmalate dehydratase large subunit (Buchnera aphidicola subsp. Cinara cedri (strain Cc)).